A 245-amino-acid polypeptide reads, in one-letter code: Orotidine 5'-phosphate decarboxylase (245 aa).

Substrate-binding positions include aspartate 22, lysine 44, aspartate 71–threonine 80, threonine 131, arginine 192, glutamine 201, glycine 221, and arginine 222. Lysine 73 functions as the Proton donor in the catalytic mechanism.

Belongs to the OMP decarboxylase family. Type 1 subfamily. In terms of assembly, homodimer.

It catalyses the reaction orotidine 5'-phosphate + H(+) = UMP + CO2. It functions in the pathway pyrimidine metabolism; UMP biosynthesis via de novo pathway; UMP from orotate: step 2/2. Functionally, catalyzes the decarboxylation of orotidine 5'-monophosphate (OMP) to uridine 5'-monophosphate (UMP). The sequence is that of Orotidine 5'-phosphate decarboxylase from Escherichia coli O45:K1 (strain S88 / ExPEC).